Consider the following 154-residue polypeptide: Ribonuclease HI (154 aa).

The 142-residue stretch at 1–142 (MPKQIEIFTD…CDELAKKGAE (142 aa)) folds into the RNase H type-1 domain. Aspartate 10, glutamate 48, aspartate 70, and aspartate 134 together coordinate Mg(2+).

The protein belongs to the RNase H family. In terms of assembly, monomer. Mg(2+) serves as cofactor.

The protein resides in the cytoplasm. It carries out the reaction Endonucleolytic cleavage to 5'-phosphomonoester.. Functionally, endonuclease that specifically degrades the RNA of RNA-DNA hybrids. This chain is Ribonuclease HI (rnhA), found in Haemophilus influenzae (strain ATCC 51907 / DSM 11121 / KW20 / Rd).